Reading from the N-terminus, the 362-residue chain is Phosphoserine aminotransferase (362 aa).

Arginine 43 is an L-glutamate binding site. Residues 77–78 (AR), tryptophan 103, threonine 153, aspartate 173, and glutamine 196 each bind pyridoxal 5'-phosphate. Lysine 197 is subject to N6-(pyridoxal phosphate)lysine.

It belongs to the class-V pyridoxal-phosphate-dependent aminotransferase family. SerC subfamily. As to quaternary structure, homodimer. The cofactor is pyridoxal 5'-phosphate.

The protein resides in the cytoplasm. The catalysed reaction is O-phospho-L-serine + 2-oxoglutarate = 3-phosphooxypyruvate + L-glutamate. It catalyses the reaction 4-(phosphooxy)-L-threonine + 2-oxoglutarate = (R)-3-hydroxy-2-oxo-4-phosphooxybutanoate + L-glutamate. It participates in amino-acid biosynthesis; L-serine biosynthesis; L-serine from 3-phospho-D-glycerate: step 2/3. Its pathway is cofactor biosynthesis; pyridoxine 5'-phosphate biosynthesis; pyridoxine 5'-phosphate from D-erythrose 4-phosphate: step 3/5. Functionally, catalyzes the reversible conversion of 3-phosphohydroxypyruvate to phosphoserine and of 3-hydroxy-2-oxo-4-phosphonooxybutanoate to phosphohydroxythreonine. This chain is Phosphoserine aminotransferase, found in Legionella pneumophila subsp. pneumophila (strain Philadelphia 1 / ATCC 33152 / DSM 7513).